Consider the following 448-residue polypeptide: Exodeoxyribonuclease 7 large subunit (448 aa).

This sequence belongs to the XseA family. As to quaternary structure, heterooligomer composed of large and small subunits.

The protein localises to the cytoplasm. The catalysed reaction is Exonucleolytic cleavage in either 5'- to 3'- or 3'- to 5'-direction to yield nucleoside 5'-phosphates.. Functionally, bidirectionally degrades single-stranded DNA into large acid-insoluble oligonucleotides, which are then degraded further into small acid-soluble oligonucleotides. This chain is Exodeoxyribonuclease 7 large subunit, found in Enterococcus faecalis (strain ATCC 700802 / V583).